The following is a 474-amino-acid chain: JmjC domain-containing protein F (474 aa).

The segment at 247 to 269 is disordered; that stretch reads KTKKQQQQQQTTTTTANNDNDNS. Residues 251-261 are compositionally biased toward low complexity; the sequence is QQQQQQTTTTT. The 170-residue stretch at 305–474 folds into the JmjC domain; sequence AYLAQHGLIE…LSLSFWFIKK (170 aa).

In Dictyostelium discoideum (Social amoeba), this protein is JmjC domain-containing protein F (jcdF).